A 459-amino-acid polypeptide reads, in one-letter code: tRNA modification GTPase MnmE (459 aa).

(6S)-5-formyl-5,6,7,8-tetrahydrofolate-binding residues include R25, E87, and R126. One can recognise a TrmE-type G domain in the interval 221–380 (GLKVAIVGRP…LETAILEIVQ (160 aa)). N231 contacts K(+). GTP-binding positions include 231 to 236 (NVGKSS), 250 to 256 (TDLPGTT), and 275 to 278 (DTAG). S235 provides a ligand contact to Mg(2+). Residues T250, L252, and T255 each coordinate K(+). T256 is a Mg(2+) binding site. A (6S)-5-formyl-5,6,7,8-tetrahydrofolate-binding site is contributed by K459.

It belongs to the TRAFAC class TrmE-Era-EngA-EngB-Septin-like GTPase superfamily. TrmE GTPase family. As to quaternary structure, homodimer. Heterotetramer of two MnmE and two MnmG subunits. K(+) serves as cofactor.

Its subcellular location is the cytoplasm. In terms of biological role, exhibits a very high intrinsic GTPase hydrolysis rate. Involved in the addition of a carboxymethylaminomethyl (cmnm) group at the wobble position (U34) of certain tRNAs, forming tRNA-cmnm(5)s(2)U34. The chain is tRNA modification GTPase MnmE from Nostoc sp. (strain PCC 7120 / SAG 25.82 / UTEX 2576).